The sequence spans 274 residues: Bis(5'-nucleosyl)-tetraphosphatase, symmetrical (274 aa).

It belongs to the Ap4A hydrolase family.

The catalysed reaction is P(1),P(4)-bis(5'-adenosyl) tetraphosphate + H2O = 2 ADP + 2 H(+). Hydrolyzes diadenosine 5',5'''-P1,P4-tetraphosphate to yield ADP. This is Bis(5'-nucleosyl)-tetraphosphatase, symmetrical from Shewanella sp. (strain W3-18-1).